A 73-amino-acid polypeptide reads, in one-letter code: MKLSLRLISALLMSVMLLFATGMGPVEARTCESPSNKFQGVCLNSQSCAKACPSEGFSGGRCSSLRCYCSKAC.

The first 28 residues, methionine 1–alanine 28, serve as a signal peptide directing secretion. Cystine bridges form between cysteine 31-cysteine 73, cysteine 42-cysteine 62, cysteine 48-cysteine 67, and cysteine 52-cysteine 69.

Belongs to the DEFL family.

The protein localises to the secreted. Confers broad-spectrum resistance to pathogens. The sequence is that of Defensin-like protein 10 (PDF2.6) from Arabidopsis thaliana (Mouse-ear cress).